The primary structure comprises 173 residues: Nanos homolog 3 (173 aa).

The tract at residues 23–51 is disordered; it reads KEGPETRLSPQPEPEPMLEPDQKRSLESS. A Nanos-type zinc finger spans residues 57 to 111; sequence LCSFCKHNGESRAIYQSHVLKDEAGRVLCPILRDYVCPQCGATRERAHTRRFCPL. Zn(2+)-binding residues include cysteine 58, cysteine 61, histidine 74, cysteine 85, cysteine 93, cysteine 96, histidine 104, and cysteine 109. 2 short sequence motifs (C2HC) span residues 58-85 and 93-109; these read CSFCKHNGESRAIYQSHVLKDEAGRVLC and CPQCGATRERAHTRRFC. The interval 123–173 is disordered; the sequence is TTRNSAGKKLVRPDKAKTQDTGHRRGGGGGAGFRGAGKSEPSPSCSPSMST. The segment covering 133–145 has biased composition (basic and acidic residues); sequence VRPDKAKTQDTGH. The span at 161 to 173 shows a compositional bias: low complexity; sequence SEPSPSCSPSMST.

This sequence belongs to the nanos family. Binds mRNA from germ cells. Interacts with PUM2. As to expression, ovary, testis and brain (at protein level). In the ovaries, expressed during multiple stages of oogenesis, including primordial, primary, secondary and antral follicles with the highest expression in the oocytes. In the testis, expressed in germ cells, type A spermatogonia (SA), primary spermatocytes (S1), round spermatids (S3) and elongated spermatids.

The protein resides in the nucleus. It localises to the cytoplasm. It is found in the stress granule. Its subcellular location is the P-body. Its function is as follows. Plays a role in the maintenance of the undifferentiated state of germ cells regulating the spermatogonia cell cycle and inducing a prolonged transit in G1 phase. Affects cell proliferation probably by repressing translation of specific mRNAs. Maintains the germ cell lineage by suppressing both Bax-dependent and -independent apoptotic pathways. Essential in the early stage embryo to protect the migrating primordial germ cells (PGCs) from apoptosis. This chain is Nanos homolog 3 (NANOS3), found in Homo sapiens (Human).